A 352-amino-acid chain; its full sequence is Sphingosine 1-phosphate receptor 2 (352 aa).

Over 1–34 (MGGLYSEYLNPEKVLEHYNYTKETLDMQETTSRK) the chain is Extracellular. The N-linked (GlcNAc...) asparagine glycan is linked to Asn-19. The helical transmembrane segment at 35–59 (VASAFIIILCCAIVVENLLVLIAVA) threads the bilayer. Topologically, residues 60–66 (RNSKFHS) are cytoplasmic. Residues 67-95 (AMYLFLGNLAASDLLAGVAFVANTLLSGH) form a helical membrane-spanning segment. The Extracellular segment spans residues 96-109 (VTLSLTPVQWFARE). The helical transmembrane segment at 110-128 (GSAFITLSASVFSLLAIAI) threads the bilayer. The Cytoplasmic portion of the chain corresponds to 129–147 (ERQVALAKVKLYGSDKSCR). Residues 148–173 (MLMLIGASWLISLILGGLPILGWNCL) traverse the membrane as a helical segment. Topologically, residues 174-189 (NQLEACSTVLPLYAKH) are extracellular. Residues 190-210 (YVLCVVTIFSVILLAIVALYV) form a helical membrane-spanning segment. The Cytoplasmic segment spans residues 211–233 (RIYFVVRSSHADVAGPQTLALLK). Residues 234 to 255 (TVTIVLGVFIICWLPAFSILLL) traverse the membrane as a helical segment. Residues 256-271 (DSTCPVRACPVLYKAH) are Extracellular-facing. Residues 272–292 (YFFAFATLNSLLNPVIYTWRS) traverse the membrane as a helical segment. At 293-352 (RDLRREVLRPLQCWRRGKGVTGRRGGNPGHRLLPLRSSSSLERGMHMPTSPTFLEGNTVV) the chain is on the cytoplasmic side. The S-palmitoyl cysteine moiety is linked to residue Cys-305. A disordered region spans residues 333–352 (LERGMHMPTSPTFLEGNTVV).

This sequence belongs to the G-protein coupled receptor 1 family. As to expression, most abundant in heart and lung; low, but clearly observed in kidney, liver and thymus; much lower but detectable in brain, testis, stomach and intestine. Not significantly detected in any of the sections of embryonic day (E) 14-18, except in embryonic brain.

It is found in the cell membrane. In terms of biological role, receptor for the lysosphingolipid sphingosine 1-phosphate (S1P). S1P is a bioactive lysophospholipid that elicits diverse physiological effects on most types of cells and tissues. Receptor for the chemokine-like protein FAM19A5. Mediates the inhibitory effect of FAM19A5 on vascular smooth muscle cell proliferation and migration. In lymphoid follicles, couples the binding of S1P to the activation of GNA13 and downstream inhibition of AKT activation leading to suppression of germinal center (GC) B cell growth and migration outside the GC niche. The sequence is that of Sphingosine 1-phosphate receptor 2 (S1pr2) from Mus musculus (Mouse).